The sequence spans 462 residues: Asparagine--tRNA ligase (462 aa).

It belongs to the class-II aminoacyl-tRNA synthetase family. In terms of assembly, homodimer.

The protein resides in the cytoplasm. It catalyses the reaction tRNA(Asn) + L-asparagine + ATP = L-asparaginyl-tRNA(Asn) + AMP + diphosphate + H(+). This is Asparagine--tRNA ligase from Borreliella afzelii (strain PKo) (Borrelia afzelii).